The primary structure comprises 750 residues: Photosystem I P700 chlorophyll a apoprotein A1 (750 aa).

8 helical membrane-spanning segments follow: residues 70-93, 156-179, 195-219, 291-309, 346-369, 385-411, 433-455, and 531-549; these read VFSA…FHGA, LYCT…FHYH, LNHH…HVSL, IAHH…GHMY, WHAQ…HHMY, LSLF…IFMV, AIIS…LYIH, and FLVH…LILL. Positions 573 and 582 each coordinate [4Fe-4S] cluster. Transmembrane regions (helical) follow at residues 589–610 and 664–686; these read HVFL…HFSW and LSAY…MFLF. A chlorophyll a'-binding site is contributed by His-675. Residues Met-683 and Tyr-691 each coordinate chlorophyll a. Trp-692 lines the phylloquinone pocket. Residues 724-744 form a helical membrane-spanning segment; sequence AVGVTHYLLGGIATTWAFFLA.

It belongs to the PsaA/PsaB family. In terms of assembly, the PsaA/B heterodimer binds the P700 chlorophyll special pair and subsequent electron acceptors. PSI consists of a core antenna complex that captures photons, and an electron transfer chain that converts photonic excitation into a charge separation. The eukaryotic PSI reaction center is composed of at least 11 subunits. Requires P700 is a chlorophyll a/chlorophyll a' dimer, A0 is one or more chlorophyll a, A1 is one or both phylloquinones and FX is a shared 4Fe-4S iron-sulfur center. as cofactor.

Its subcellular location is the plastid. The protein resides in the chloroplast thylakoid membrane. It carries out the reaction reduced [plastocyanin] + hnu + oxidized [2Fe-2S]-[ferredoxin] = oxidized [plastocyanin] + reduced [2Fe-2S]-[ferredoxin]. Its function is as follows. PsaA and PsaB bind P700, the primary electron donor of photosystem I (PSI), as well as the electron acceptors A0, A1 and FX. PSI is a plastocyanin-ferredoxin oxidoreductase, converting photonic excitation into a charge separation, which transfers an electron from the donor P700 chlorophyll pair to the spectroscopically characterized acceptors A0, A1, FX, FA and FB in turn. Oxidized P700 is reduced on the lumenal side of the thylakoid membrane by plastocyanin. In Hordeum vulgare (Barley), this protein is Photosystem I P700 chlorophyll a apoprotein A1.